We begin with the raw amino-acid sequence, 317 residues long: Gamma-glutamyl hydrolase (317 aa).

The N-terminal stretch at 1–24 is a signal peptide; sequence MANLGYLLCLLGLLLCGLSSPGMS. The Gamma-glutamyl hydrolase domain maps to 25-317; sequence RPYNHGSERP…SSFQQAYMFD (293 aa). N-linked (GlcNAc...) (high mannose) asparagine glycosylation occurs at Asn100. The Nucleophile role is filled by Cys133. Residues Asn162 and Asn188 are each glycosylated (N-linked (GlcNAc...) (high mannose) asparagine). Asn202 is a glycosylation site (N-linked (GlcNAc...) asparagine). The active-site Proton donor is His243. Residue Asn306 is glycosylated (N-linked (GlcNAc...) asparagine).

The protein belongs to the peptidase C26 family. In terms of assembly, homodimer. As to expression, isoform I (more expressed than isoform II in all tissues) is highly expressed in salivary gland, followed by kidney, liver, lung, stomach and uterus, and weakly expressed in small intestine, brain and fetal liver. Also expressed at a lower level in thymus, spleen and skeletal muscle. Also expressed in tumors.

It localises to the secreted. The protein localises to the extracellular space. Its subcellular location is the lysosome. The protein resides in the melanosome. It carries out the reaction (6S)-5,6,7,8-tetrahydrofolyl-(gamma-L-Glu)(n) + (n-1) H2O = (6S)-5,6,7,8-tetrahydrofolate + (n-1) L-glutamate. Its function is as follows. Hydrolyzes the polyglutamate sidechains of pteroylpolyglutamates. Progressively removes gamma-glutamyl residues from pteroylpoly-gamma-glutamate to yield pteroyl-alpha-glutamate (folic acid) and free glutamate. May play an important role in the bioavailability of dietary pteroylpolyglutamates and in the metabolism of pteroylpolyglutamates and antifolates. This Mus musculus (Mouse) protein is Gamma-glutamyl hydrolase (Ggh).